Here is a 263-residue protein sequence, read N- to C-terminus: Acidic leucine-rich nuclear phosphoprotein 32 family member E (263 aa).

LRR repeat units lie at residues 43–64 (ELEF…PKLP), 65–84 (KLRK…DVLT), and 89–110 (NITY…EALA). Residues 123-161 (CEITNLEDYRENIFQRLSQITYLDGFDQEDNEAPDSEED) form the LRRCT domain. A disordered region spans residues 146–263 (DGFDQEDNEA…PEDEGDEDED (118 aa)). 3 stretches are compositionally biased toward acidic residues: residues 148–172 (FDQE…DDEE), 180–203 (AEED…EEEV), and 214–242 (RDEE…DEAA). Positions 202–263 (EVGLSYLMKE…PEDEGDEDED (62 aa)) are ZID domain.

Belongs to the ANP32 family. Component of a SWR1-like complex. Interacts with H2A.Z/H2AZ1. In terms of processing, phosphorylated. The phosphorylation is nuclear localization signal (NLS)-dependent.

It is found in the cytoplasm. The protein resides in the nucleus. In terms of biological role, histone chaperone that specifically mediates the genome-wide removal of histone H2A.Z/H2AZ1 from the nucleosome: removes H2A.Z/H2AZ1 from its normal sites of deposition, especially from enhancer and insulator regions. Not involved in deposition of H2A.Z/H2AZ1 in the nucleosome. May stabilize the evicted H2A.Z/H2AZ1-H2B dimer, thus shifting the equilibrium towards dissociation and the off-chromatin state. Inhibits activity of protein phosphatase 2A (PP2A). Does not inhibit protein phosphatase 1. May play a role in cerebellar development and synaptogenesis. In Xenopus laevis (African clawed frog), this protein is Acidic leucine-rich nuclear phosphoprotein 32 family member E (anp32e).